A 527-amino-acid polypeptide reads, in one-letter code: Pentatricopeptide repeat-containing protein At5g41170, mitochondrial (527 aa).

A mitochondrion-targeting transit peptide spans 1–35 (MAMRFFQLHRNRLVKGNSGKALSFSRLLDLSFWVR). PPR repeat units lie at residues 36 to 70 (AFCNYREILRNGLHSLQFNEALDLFTHMVESRPLP), 71 to 105 (SIIDFTKLLNVIAKMKKFDVVINLCDHLQIMGVSH), 106 to 140 (DLYTCNLLMNCFCQSSQPYLASSFLGKMMKLGFEP), 141 to 175 (DIVTFTSLINGFCLGNRMEEAMSMVNQMVEMGIKP), 176 to 210 (DVVMYTTIIDSLCKNGHVNYALSLFDQMENYGIRP), 211 to 245 (DVVMYTSLVNGLCNSGRWRDADSLLRGMTKRKIKP), 246 to 280 (DVITFNALIDAFVKEGKFLDAEELYNEMIRMSIAP), 281 to 315 (NIFTYTSLINGFCMEGCVDEARQMFYLMETKGCFP), 316 to 350 (DVVAYTSLINGFCKCKKVDDAMKIFYEMSQKGLTG), 351 to 385 (NTITYTTLIQGFGQVGKPNVAQEVFSHMVSRGVPP), 386 to 420 (NIRTYNVLLHCLCYNGKVKKALMIFEDMQKREMDG), 424 to 458 (NIWTYNVLLHGLCYNGKLEKALMVFEDMRKREMDI), 459 to 493 (GIITYTIIIQGMCKAGKVKNAVNLFCSLPSKGVKP), and 494 to 527 (NVVTYTTMISGLFREGLKHEAHVLFRKMKEDGVS).

It belongs to the PPR family. P subfamily.

It localises to the mitochondrion. In Arabidopsis thaliana (Mouse-ear cress), this protein is Pentatricopeptide repeat-containing protein At5g41170, mitochondrial.